The sequence spans 229 residues: 2-C-methyl-D-erythritol 4-phosphate cytidylyltransferase (229 aa).

The protein belongs to the IspD/TarI cytidylyltransferase family. IspD subfamily.

The catalysed reaction is 2-C-methyl-D-erythritol 4-phosphate + CTP + H(+) = 4-CDP-2-C-methyl-D-erythritol + diphosphate. Its pathway is isoprenoid biosynthesis; isopentenyl diphosphate biosynthesis via DXP pathway; isopentenyl diphosphate from 1-deoxy-D-xylulose 5-phosphate: step 2/6. Its function is as follows. Catalyzes the formation of 4-diphosphocytidyl-2-C-methyl-D-erythritol from CTP and 2-C-methyl-D-erythritol 4-phosphate (MEP). This is 2-C-methyl-D-erythritol 4-phosphate cytidylyltransferase from Clostridium acetobutylicum (strain ATCC 824 / DSM 792 / JCM 1419 / IAM 19013 / LMG 5710 / NBRC 13948 / NRRL B-527 / VKM B-1787 / 2291 / W).